A 93-amino-acid polypeptide reads, in one-letter code: UPF0147 protein MJ1419 (93 aa).

The protein belongs to the UPF0147 family.

This Methanocaldococcus jannaschii (strain ATCC 43067 / DSM 2661 / JAL-1 / JCM 10045 / NBRC 100440) (Methanococcus jannaschii) protein is UPF0147 protein MJ1419.